Here is a 469-residue protein sequence, read N- to C-terminus: Citrate synthase, mitochondrial (469 aa).

The transit peptide at 1–31 (MTLLTASSRAAARLLGAKNSSCIIFAARHAS) directs the protein to the mitochondrion. Catalysis depends on residues H304 and H350. R359 contacts oxaloacetate. D405 is an active-site residue. Oxaloacetate-binding residues include R431 and R451.

It belongs to the citrate synthase family. In terms of assembly, homodimer.

The protein localises to the mitochondrion matrix. The enzyme catalyses oxaloacetate + acetyl-CoA + H2O = citrate + CoA + H(+). The protein operates within carbohydrate metabolism; tricarboxylic acid cycle; isocitrate from oxaloacetate: step 1/2. Its function is as follows. Key enzyme of the Krebs tricarboxylic acid cycle which catalyzes the synthesis of citrate from acetyl coenzyme A and oxaloacetate. This chain is Citrate synthase, mitochondrial (CS), found in Amblyrhynchus cristatus (Galapagos marine iguana).